We begin with the raw amino-acid sequence, 295 residues long: Xyloglucan endotransglucosylase/hydrolase (295 aa).

Positions 1–23 (MAVSSTPWALVALFLMASSTVMA) are cleaved as a signal peptide. Positions 25-222 (PPRKAIDVPF…WANAPFIASY (198 aa)) constitute a GH16 domain. Glu108 functions as the Nucleophile in the catalytic mechanism. The active-site Proton donor is Glu112. Residue Glu112 participates in xyloglucan binding. Asn116 carries an N-linked (GlcNAc...) asparagine glycan. Xyloglucan contacts are provided by residues 125 to 127 (QTN), 135 to 137 (NRE), 201 to 202 (DW), and Gly206. Cystine bridges form between Cys230–Cys239 and Cys276–Cys289. Residue Arg281 participates in xyloglucan binding.

This sequence belongs to the glycosyl hydrolase 16 family. XTH group 1 subfamily. Post-translationally, contains at least one intrachain disulfide bond essential for its enzymatic activity. The N-glycan consists of an (GlcNAc)2(Hex)6 oligosaccharide; not essential for its enzymatic activity.

The protein resides in the secreted. Its subcellular location is the cell wall. It localises to the extracellular space. It is found in the apoplast. The enzyme catalyses breaks a beta-(1-&gt;4) bond in the backbone of a xyloglucan and transfers the xyloglucanyl segment on to O-4 of the non-reducing terminal glucose residue of an acceptor, which can be a xyloglucan or an oligosaccharide of xyloglucan.. Functionally, catalyzes xyloglucan endohydrolysis (XEH) and/or endotransglycosylation (XET). Cleaves and religates xyloglucan polymers, an essential constituent of the primary cell wall, and thereby participates in cell wall construction of growing tissues. In Brassica oleracea var. botrytis (Cauliflower), this protein is Xyloglucan endotransglucosylase/hydrolase (XET16A).